A 442-amino-acid polypeptide reads, in one-letter code: Glutamyl-tRNA reductase (442 aa).

Substrate contacts are provided by residues 49-52 (TCNR), serine 109, 114-116 (EGQ), and glutamine 120. The active-site Nucleophile is the cysteine 50. 198–203 (GAGRMA) contributes to the NADP(+) binding site. The interval 420 to 442 (MAAAQRLFDLPGDDADRDRSDAK) is disordered. Residues 433 to 442 (DADRDRSDAK) are compositionally biased toward basic and acidic residues.

Belongs to the glutamyl-tRNA reductase family. As to quaternary structure, homodimer.

The catalysed reaction is (S)-4-amino-5-oxopentanoate + tRNA(Glu) + NADP(+) = L-glutamyl-tRNA(Glu) + NADPH + H(+). It functions in the pathway porphyrin-containing compound metabolism; protoporphyrin-IX biosynthesis; 5-aminolevulinate from L-glutamyl-tRNA(Glu): step 1/2. It participates in porphyrin-containing compound metabolism; chlorophyll biosynthesis. Functionally, catalyzes the NADPH-dependent reduction of glutamyl-tRNA(Glu) to glutamate 1-semialdehyde (GSA). In Synechococcus sp. (strain RCC307), this protein is Glutamyl-tRNA reductase.